The primary structure comprises 478 residues: Alcohol dehydrogenase (quinone), cytochrome c subunit (478 aa).

A signal peptide spans Met-1–Ala-36. Gln-37 carries the pyrrolidone carboxylic acid modification. Cytochrome c domains follow at residues Ala-42–Val-145, Pro-189–Pro-304, and Gly-327–Trp-417. Residues Cys-56, Cys-59, His-60, Cys-204, Cys-207, His-208, Cys-340, Cys-343, and His-344 each coordinate heme c.

In terms of assembly, the alcohol dehydrogenase multicomponent enzyme system is composed of a dehydrogenase subunit I (AdhA), a cytochrome c subunit II (AdhB) and a subunit III (AdhS). Requires heme c as cofactor.

The protein localises to the cell membrane. The catalysed reaction is ethanol + a ubiquinone = a ubiquinol + acetaldehyde. With respect to regulation, 2,6-dichloro-4-dicyanovinylphenol (PC16) and antimycin A inhibit ubiquinol oxidation activity more selectively than the ubiquinone reductase activity. Its function is as follows. Cytochrome c component of the alcohol dehydrogenase multicomponent enzyme system which is involved in the production of acetic acid and in the ethanol oxidase respiratory chain. Quinohemoprotein alcohol dehydrogenase (ADH) catalyzes the oxidation of ethanol to acetaldehyde by transferring electrons to the ubiquinone embedded in the membrane phospholipids. The electrons transfer from ethanol to membranous ubiquinone occurs from pyrroloquinoline quinone (PQQ) to one heme c in subunit I (AdhA), and finally to two heme c in subunit II (AdhB). Besides ubiquinone reduction, ADH also has a ubiquinol (QH2) oxidation reaction which mediates electron transfer from ubiquinol to the non-energy generating bypass oxidase system. The electrons transfer occurs from ubiquinol (QH2) to the additional heme c within subunit II (AdhB). Also able to use quinone analogs such as 2,3-dimethoxy-5-methyl-6-n-decyl-1,4-benzoquinone (DB) and 2,3-dimethoxy-5-methyl-6-n-pentyl-1,4-benzoquinone (PB). This chain is Alcohol dehydrogenase (quinone), cytochrome c subunit, found in Gluconobacter oxydans (strain 621H) (Gluconobacter suboxydans).